We begin with the raw amino-acid sequence, 82 residues long: Protein Rv1078A (82 aa).

The segment covering 35–54 (GGPTRRLRRRPAVTRRRRPD) has biased composition (basic residues). A disordered region spans residues 35 to 82 (GGPTRRLRRRPAVTRRRRPDRRFVRCRPSPTRRGLPGCWRHSSTGPHT).

Its subcellular location is the cytoplasm. The protein is Protein Rv1078A of Mycobacterium tuberculosis (strain ATCC 25618 / H37Rv).